The following is a 295-amino-acid chain: Ethanolamine ammonia-lyase small subunit (295 aa).

Residues Val207, Glu228, and Cys258 each contribute to the adenosylcob(III)alamin site.

Belongs to the EutC family. As to quaternary structure, the basic unit is a heterodimer which dimerizes to form tetramers. The heterotetramers trimerize; 6 large subunits form a core ring with 6 small subunits projecting outwards. The cofactor is adenosylcob(III)alamin.

Its subcellular location is the bacterial microcompartment. The catalysed reaction is ethanolamine = acetaldehyde + NH4(+). It participates in amine and polyamine degradation; ethanolamine degradation. Its function is as follows. Catalyzes the deamination of various vicinal amino-alcohols to oxo compounds. Allows this organism to utilize ethanolamine as the sole source of nitrogen and carbon in the presence of external vitamin B12. This chain is Ethanolamine ammonia-lyase small subunit, found in Escherichia coli (strain 55989 / EAEC).